Reading from the N-terminus, the 516-residue chain is Lipid II flippase MurJ (516 aa).

11 consecutive transmembrane segments (helical) span residues 93-113 (WALA…VFAV), 133-153 (IMFP…VLNT), 159-179 (LPAF…VFVA), 188-208 (ALAW…LPGL), 233-253 (VLAK…SLII), 275-295 (LMEF…LPSL), 317-337 (VTFL…TPLT), 358-378 (LATY…APGF), 390-409 (IAIG…VPLI), 448-468 (FFVQ…WCAI), and 483-503 (IALM…MLWV).

Belongs to the MurJ/MviN family.

Its subcellular location is the cell inner membrane. It participates in cell wall biogenesis; peptidoglycan biosynthesis. Functionally, involved in peptidoglycan biosynthesis. Transports lipid-linked peptidoglycan precursors from the inner to the outer leaflet of the cytoplasmic membrane. This Burkholderia cenocepacia (strain ATCC BAA-245 / DSM 16553 / LMG 16656 / NCTC 13227 / J2315 / CF5610) (Burkholderia cepacia (strain J2315)) protein is Lipid II flippase MurJ.